The sequence spans 835 residues: MTEDFPKILPLLVEEDTFLYPFMIAPIFLQNNASIKAVAYAKNNKSLVFIACQKDKLNDNEAPYYDVGVIGSVMREANMPNGRVKLLFNGIAKGRILEPAKENEQGFLEAQISPIEYLEYDKENIQAIVEVLKEKVITLANVSSLFPPDLIKALEDNDDPNRIADLIAAALHLKKDQAYSLFANNNTEQRLLDLIDIVIEETKTQKLQKEIKSKVHQKMEQTNKEYFLKEQLKQIQKELGTDKQRDEDLNQYYQKLESIKPFLKEEAFKEIKKQIDRLSRTHADSSDSATLQNYIETMLDVPFGQYGKKALDIKHVREQLDKDHYSLKRPKERIVEYFATMQLLEMRRKKKPEKKDKTKGTILCFYGPPGVGKTSLANSIAKAIERPLVRIALGGLEDVNELRGHRRTYIGSMPGRIVQGLIEAKKMNPVMVLDEIDKVDRSVRGDPASALLEILDPEQNTAFRDHYANFSIDLSQVIFIATANNIDRIPAPLRDRMEFISVSSYTPNEKEEIAKNYLIPQELEKHALKPSEVEISHECLKLIIEKYTREAGVRDLRRQIATIMRKVALKYLEDNPHQKGRTKKGKNEKSEDQKSEDQKSENQKSENKDFCVSITPNNLKEYLERMVFEIDPIDEENKIGIVNGLAWTPVGGDVLKIEVLKIRGKGELKLTGSLGDVMKESAIIAFSVVKVLLDNETLKVPKIPSETDAEGKKKKKVLKVYNAYDLHLHVPEGATPKDGPSAGIAMASVMASILCDRATRSEVAMTGELTLSGEVLPIGGLKEKLIAAFKAGIKTALIPVKNYERDLDEIPAEVRENLNIVAVKNIAEVLEKTLL.

Residues 9–202 form the Lon N-terminal domain; sequence LPLLVEEDTF…DLIDIVIEET (194 aa). Residue 367–374 participates in ATP binding; sequence GPPGVGKT. The interval 574-610 is disordered; the sequence is DNPHQKGRTKKGKNEKSEDQKSEDQKSENQKSENKDF. The segment covering 585–609 has biased composition (basic and acidic residues); that stretch reads GKNEKSEDQKSEDQKSENQKSENKD. The Lon proteolytic domain occupies 636–835; that stretch reads ENKIGIVNGL…IAEVLEKTLL (200 aa). Active-site residues include Ser741 and Lys784.

Belongs to the peptidase S16 family. As to quaternary structure, homohexamer. Organized in a ring with a central cavity.

The protein resides in the cytoplasm. It carries out the reaction Hydrolysis of proteins in presence of ATP.. Functionally, ATP-dependent serine protease that mediates the selective degradation of mutant and abnormal proteins as well as certain short-lived regulatory proteins. Required for cellular homeostasis and for survival from DNA damage and developmental changes induced by stress. Degrades polypeptides processively to yield small peptide fragments that are 5 to 10 amino acids long. Binds to DNA in a double-stranded, site-specific manner. This is Lon protease from Helicobacter pylori (strain ATCC 700392 / 26695) (Campylobacter pylori).